The following is a 108-amino-acid chain: C-C motif chemokine 19 (108 aa).

Positions 1–25 (MAPRVTPLLAFSLLVLWTFPAPTLG) are cleaved as a signal peptide. 2 disulfide bridges follow: Cys33–Cys59 and Cys34–Cys75. Residue Asn100 is glycosylated (N-linked (GlcNAc...) asparagine).

It belongs to the intercrine beta (chemokine CC) family. Interacts with TNFAIP6 (via Link domain). In terms of tissue distribution, highly expressed by dendritic cells in mesenteric and peripheral lymph nodes. Significant expression in spleen (T cell zone or periarteriolar lymphatic sheath) and Peyer patches. Low expression in thymus.

It is found in the secreted. Strongly chemotactic for naive (L-selectinhi) CD4 T-cells and for CD8 T-cells and weakly attractive for resting B-cells and memory (L-selectinlo) CD4 T-cells. May play a role in promoting encounters between recirculating T-cells and dendritic cells and in the migration of activated B-cells into the T-zone of secondary lymphoid tissues. Binds to chemokine receptor CCR7. Binds to atypical chemokine receptor ACKR4 and mediates the recruitment of beta-arrestin (ARRB1/2) to ACKR4. This Mus musculus (Mouse) protein is C-C motif chemokine 19 (Ccl19).